Here is a 547-residue protein sequence, read N- to C-terminus: MAAKQVLFADEARVRIVRGVNVLANAVKTTLGPKGRNVVLERSFGAPTVTKDGVSVAKEIELKDKFENIGAQLVKDVASKTSDNAGDGTTTATVLAQAVVQEGLKYVAAGFNPIDLKRGIDKAVAAAVEELKKLSKPVTTSKEIAQVGSISANSDASIGQIIADAMDKVGKEGVITVEDGKSLENELDVVEGMQFDRGYLSPYFINSPEKQVAALDDPYVLIYDKKVSNIRDLLPVLEQVAKSSRPLLIIAEDVEGEALATLVVNNIRGILKTTAVKAPGFGDRRKAMLEDIAILTGGTVISEETGMSLEKATLQDLGQAKRIEVAKENTTIIDGAGDGKSIEARVKQIRAQIEEATSDYDREKLQERVAKLAGGVAVIRVGAATEVEMKEKKARVEDALHATRAAVEEGVVPGGGVALLRAKQAITGLKGDTADQNAGIKLILRAVEEPLRTIVTNAGDEASVVVNTVLNGKGNYGYNAATGEYGDLVEQGVLDPTKVTRTALQNAASVASLLLTAEAAVVELMENKPAAAPAMPGGMGGMGGMDF.

Residues 30 to 33, Lys-51, 87 to 91, Gly-415, 479 to 481, and Asp-495 contribute to the ATP site; these read TLGP, DGTTT, and NAA.

Belongs to the chaperonin (HSP60) family. In terms of assembly, forms a cylinder of 14 subunits composed of two heptameric rings stacked back-to-back. Interacts with the co-chaperonin GroES.

The protein resides in the cytoplasm. The catalysed reaction is ATP + H2O + a folded polypeptide = ADP + phosphate + an unfolded polypeptide.. In terms of biological role, together with its co-chaperonin GroES, plays an essential role in assisting protein folding. The GroEL-GroES system forms a nano-cage that allows encapsulation of the non-native substrate proteins and provides a physical environment optimized to promote and accelerate protein folding. This chain is Chaperonin GroEL, found in Bordetella pertussis (strain Tohama I / ATCC BAA-589 / NCTC 13251).